The chain runs to 236 residues: Biosynthetic peptidoglycan transglycosylase (236 aa).

A helical membrane pass occupies residues 20-40 (LVFIVLSVLILPYALIGLYLL).

It belongs to the glycosyltransferase 51 family.

The protein resides in the cell inner membrane. The catalysed reaction is [GlcNAc-(1-&gt;4)-Mur2Ac(oyl-L-Ala-gamma-D-Glu-L-Lys-D-Ala-D-Ala)](n)-di-trans,octa-cis-undecaprenyl diphosphate + beta-D-GlcNAc-(1-&gt;4)-Mur2Ac(oyl-L-Ala-gamma-D-Glu-L-Lys-D-Ala-D-Ala)-di-trans,octa-cis-undecaprenyl diphosphate = [GlcNAc-(1-&gt;4)-Mur2Ac(oyl-L-Ala-gamma-D-Glu-L-Lys-D-Ala-D-Ala)](n+1)-di-trans,octa-cis-undecaprenyl diphosphate + di-trans,octa-cis-undecaprenyl diphosphate + H(+). It functions in the pathway cell wall biogenesis; peptidoglycan biosynthesis. In terms of biological role, peptidoglycan polymerase that catalyzes glycan chain elongation from lipid-linked precursors. The sequence is that of Biosynthetic peptidoglycan transglycosylase from Rhizobium meliloti (strain 1021) (Ensifer meliloti).